A 121-amino-acid chain; its full sequence is Ribonuclease P protein component (121 aa).

Belongs to the RnpA family. As to quaternary structure, consists of a catalytic RNA component (M1 or rnpB) and a protein subunit.

The catalysed reaction is Endonucleolytic cleavage of RNA, removing 5'-extranucleotides from tRNA precursor.. Functionally, RNaseP catalyzes the removal of the 5'-leader sequence from pre-tRNA to produce the mature 5'-terminus. It can also cleave other RNA substrates such as 4.5S RNA. The protein component plays an auxiliary but essential role in vivo by binding to the 5'-leader sequence and broadening the substrate specificity of the ribozyme. The protein is Ribonuclease P protein component of Oceanobacillus iheyensis (strain DSM 14371 / CIP 107618 / JCM 11309 / KCTC 3954 / HTE831).